The sequence spans 80 residues: Small ribosomal subunit protein bS18 (80 aa).

This sequence belongs to the bacterial ribosomal protein bS18 family. As to quaternary structure, part of the 30S ribosomal subunit. Forms a tight heterodimer with protein bS6.

Functionally, binds as a heterodimer with protein bS6 to the central domain of the 16S rRNA, where it helps stabilize the platform of the 30S subunit. This chain is Small ribosomal subunit protein bS18, found in Staphylococcus haemolyticus (strain JCSC1435).